Reading from the N-terminus, the 327-residue chain is Flotillin-like protein FloA (327 aa).

A helical membrane pass occupies residues 7-27 (FLVPILIVILLLVFFSLVPVG).

The protein belongs to the flotillin-like FloA family. Homooligomerizes.

The protein resides in the cell membrane. It is found in the membrane raft. Functionally, found in functional membrane microdomains (FMM) that may be equivalent to eukaryotic membrane rafts. FMMs are highly dynamic and increase in number as cells age. Flotillins are thought to be important factors in membrane fluidity. This chain is Flotillin-like protein FloA, found in Finegoldia magna (strain ATCC 29328 / DSM 20472 / WAL 2508) (Peptostreptococcus magnus).